Reading from the N-terminus, the 540-residue chain is MTLNSLPVWPALQAHYEEIRDAHLRDWFAPANDRAPTRAERFTFEGGGLAADFSKNRLTDATLALLVRLAREAGVEARRDAMFAGETVNPTEGRAALHTALRANAPDAPFQAQVAAERAKMARFADAVRSGAWTGYTGKRIRHVVNIGIGGSDLGPKMVVHALHHVATPDIATHFVSNVDGADLARVLERIDPEETLAIIVSKTFTTLETMTNARSLRDWFVANGCPEGALAKHFVGVSANPAEVVKFGIAEANVFEMWDWVGGRYSLWSAVGLSIMIAIGPERFDELLAGARDMDEHFRTAPLERNLPVLQGLVGIWYRNFFGAQSYLVAPYSEALHYLPSYLQQLEMESNGKSARIDGAFVDYPTSAVTWGEPGTNGQHAFFQMLHQGPTLVPIDFIAVLTPEHPLASHHPKLLANCFAQSEALMLGRTLDEARKIAGPAKPELAPHLTFPGNRPTTTLLVDALTPRTLGALIALYEHKVLVQAAVWNINPFDQWGVELGKILGKVVEADLTAAQVDPAKHDSSTSALIARARKALGE.

Glu-350 (proton donor) is an active-site residue. Catalysis depends on residues His-381 and Lys-503.

It belongs to the GPI family.

The protein localises to the cytoplasm. The catalysed reaction is alpha-D-glucose 6-phosphate = beta-D-fructose 6-phosphate. It functions in the pathway carbohydrate biosynthesis; gluconeogenesis. The protein operates within carbohydrate degradation; glycolysis; D-glyceraldehyde 3-phosphate and glycerone phosphate from D-glucose: step 2/4. In terms of biological role, catalyzes the reversible isomerization of glucose-6-phosphate to fructose-6-phosphate. The protein is Glucose-6-phosphate isomerase of Burkholderia mallei (strain NCTC 10247).